The primary structure comprises 81 residues: Photosystem I iron-sulfur center (81 aa).

4Fe-4S ferredoxin-type domains follow at residues 2-31 and 39-68; these read SHSV…MIPW and IASA…VRVY. [4Fe-4S] cluster contacts are provided by Cys11, Cys14, Cys17, Cys21, Cys48, Cys51, Cys54, and Cys58.

As to quaternary structure, the eukaryotic PSI reaction center is composed of at least 11 subunits. [4Fe-4S] cluster serves as cofactor.

It localises to the plastid. The protein localises to the chloroplast thylakoid membrane. The enzyme catalyses reduced [plastocyanin] + hnu + oxidized [2Fe-2S]-[ferredoxin] = oxidized [plastocyanin] + reduced [2Fe-2S]-[ferredoxin]. Functionally, apoprotein for the two 4Fe-4S centers FA and FB of photosystem I (PSI); essential for photochemical activity. FB is the terminal electron acceptor of PSI, donating electrons to ferredoxin. The C-terminus interacts with PsaA/B/D and helps assemble the protein into the PSI complex. Required for binding of PsaD and PsaE to PSI. PSI is a plastocyanin-ferredoxin oxidoreductase, converting photonic excitation into a charge separation, which transfers an electron from the donor P700 chlorophyll pair to the spectroscopically characterized acceptors A0, A1, FX, FA and FB in turn. The polypeptide is Photosystem I iron-sulfur center (Acorus calamus (Sweet flag)).